Reading from the N-terminus, the 144-residue chain is Deoxyuridine 5'-triphosphate nucleotidohydrolase (144 aa).

Substrate contacts are provided by residues 63-65, asparagine 76, and 80-82; these read RSG and TID.

It belongs to the dUTPase family. It depends on Mg(2+) as a cofactor.

The catalysed reaction is dUTP + H2O = dUMP + diphosphate + H(+). It participates in pyrimidine metabolism; dUMP biosynthesis; dUMP from dCTP (dUTP route): step 2/2. In terms of biological role, this enzyme is involved in nucleotide metabolism: it produces dUMP, the immediate precursor of thymidine nucleotides and it decreases the intracellular concentration of dUTP so that uracil cannot be incorporated into DNA. The sequence is that of Deoxyuridine 5'-triphosphate nucleotidohydrolase from Bacteroides fragilis (strain YCH46).